A 37-amino-acid chain; its full sequence is Cytochrome b6-f complex subunit 5 (37 aa).

A helical membrane pass occupies residues 5 to 25 (FLFGIVLGLIPITLAGLFVTA).

Belongs to the PetG family. The 4 large subunits of the cytochrome b6-f complex are cytochrome b6, subunit IV (17 kDa polypeptide, PetD), cytochrome f and the Rieske protein, while the 4 small subunits are PetG, PetL, PetM and PetN. The complex functions as a dimer.

The protein localises to the plastid. It is found in the chloroplast thylakoid membrane. Its function is as follows. Component of the cytochrome b6-f complex, which mediates electron transfer between photosystem II (PSII) and photosystem I (PSI), cyclic electron flow around PSI, and state transitions. PetG is required for either the stability or assembly of the cytochrome b6-f complex. The sequence is that of Cytochrome b6-f complex subunit 5 from Capsella bursa-pastoris (Shepherd's purse).